Reading from the N-terminus, the 753-residue chain is Inactive protein-tyrosine phosphatase egg-4 (753 aa).

Disordered regions lie at residues 26–46 and 75–145; these read TSLQ…STDN and SFRK…SGHG. Over residues 35–46 the composition is skewed to low complexity; the sequence is NTDDSSADSTDN. 2 stretches are compositionally biased toward basic and acidic residues: residues 84–94 and 129–145; these read AQKDRRSKERL and VSEK…SGHG. A Tyrosine-protein phosphatase domain is found at 408 to 661; sequence MERRFEILEN…IFVHRLVAFF (254 aa).

Belongs to the protein-tyrosine phosphatase family. As to quaternary structure, part of a complex, consisting of pseudophosphatases egg-3, egg-4, egg-5 and kinase mbk-2; this complex is required for the oocyte-to-zygote transition. Interacts (via tyrosine-protein phosphatase domain) with kinase mbk-2 (via 'Tyr-619' and 'Tyr-621'); mbk-2 tyrosine phosphorylation enhances the interaction. The interaction inhibits mbk-2 kinase activity and is required for mbk-2 oocyte cortex localization. Interacts with egg-3.

The protein resides in the cytoplasm. The protein localises to the cell cortex. Inactive phosphatase which acts redundantly with egg-5 in the oocyte-to-zygote transition. Required for the polarization of cortical actin cytoskeleton rearrangement in the oocyte before and after fertilization. Together with egg-5, required for the cortical localization of kinase mbk-2 and for the inhibition of mbk-2 kinase activity in maturing oocyte until the end of meiosis I. Also required for kinase mbk-2, pseudophosphatase egg-3 and chitin synthase chs-1 localization to cytoplasmic foci after fertilization. This is Inactive protein-tyrosine phosphatase egg-4 from Caenorhabditis elegans.